A 92-amino-acid chain; its full sequence is Small ribosomal subunit protein uS19 (92 aa).

It belongs to the universal ribosomal protein uS19 family.

Functionally, protein S19 forms a complex with S13 that binds strongly to the 16S ribosomal RNA. In Klebsiella pneumoniae (strain 342), this protein is Small ribosomal subunit protein uS19.